The primary structure comprises 197 residues: MAILSDKDIKKYLDEGRIVIDPITNEKQIQPSSVDLRLGDQFKGFKIITKPYIDPFDNTDLESYMSSITVEEDKPFIIHPGEFTLATTYENVKLPDDIVARVEGRSSMGRLGITMHVTAGYIDPGFEGNITLEISNIGKMPVALYPGQRVCQIVFETMTSPSEKPYGHEDRDSKYMGQTGPQVSKIKEDFDIINGGK.

DCTP contacts are provided by residues 105 to 110, aspartate 123, 131 to 133, glutamine 152, tyrosine 166, lysine 174, and glutamine 178; these read RSSMGR and TLE. Glutamate 133 serves as the catalytic Proton donor/acceptor.

This sequence belongs to the dCTP deaminase family. As to quaternary structure, homotrimer.

The enzyme catalyses dCTP + 2 H2O = dUMP + NH4(+) + diphosphate. It functions in the pathway pyrimidine metabolism; dUMP biosynthesis; dUMP from dCTP: step 1/1. In terms of biological role, bifunctional enzyme that catalyzes both the deamination of dCTP to dUTP and the hydrolysis of dUTP to dUMP without releasing the toxic dUTP intermediate. In Methanosphaera stadtmanae (strain ATCC 43021 / DSM 3091 / JCM 11832 / MCB-3), this protein is dCTP deaminase, dUMP-forming.